A 182-amino-acid polypeptide reads, in one-letter code: ADP-ribosylation factor-like protein 3 (182 aa).

A lipid anchor (N-myristoyl glycine) is attached at glycine 2. Position 5 is a phosphoserine (serine 5). GTP is bound by residues 24 to 31 (GLDNAGKT), threonine 48, 67 to 71 (DIGGQ), glycine 70, 126 to 129 (NKQD), and 159 to 161 (SAL). Positions 31 and 48 each coordinate Mg(2+).

It belongs to the small GTPase superfamily. Arf family. As to quaternary structure, found in a complex with ARL3, RP2 and UNC119 (or UNC119B); RP2 induces hydrolysis of GTP ARL3 in the complex, leading to the release of UNC119 (or UNC119B). Interacts with RP2; interaction is direct and stimulated with the activated GTP-bound form of ARL3. Interacts with SYS1. Interacts with ARL2BP; the GTP-bound form interacts with ARL2BP. Microtubule-associated protein. Does not interact with TBCC. Interacts with RP2. Interacts with PDE6D; the interaction occurs specifically with the GTP-bound form of ARL3. Interacts with GGA1; the interaction recruits PKD1:PKD2 complex to trans-Golgi network and is required for ciliary targeting of PKD1:PKD2 complex. Interacts with DNAAF9.

It localises to the golgi apparatus membrane. Its subcellular location is the cytoplasm. The protein resides in the cytoskeleton. It is found in the spindle. The protein localises to the nucleus. It localises to the microtubule organizing center. Its subcellular location is the centrosome. The protein resides in the cell projection. It is found in the cilium. Small GTP-binding protein which cycles between an inactive GDP-bound and an active GTP-bound form, and the rate of cycling is regulated by guanine nucleotide exchange factors (GEF) and GTPase-activating proteins (GAP). Required for normal cytokinesis and cilia signaling. Requires assistance from GTPase-activating proteins (GAPs) like RP2 and PDE6D, in order to cycle between inactive GDP-bound and active GTP-bound forms. Required for targeting proteins to the cilium, including myristoylated NPHP3 and prenylated INPP5E. Targets NPHP3 to the ciliary membrane by releasing myristoylated NPHP3 from UNC119B cargo adapter into the cilium. Required for PKD1:PKD2 complex targeting from the trans-Golgi network to the cilium. The chain is ADP-ribosylation factor-like protein 3 (Arl3) from Rattus norvegicus (Rat).